The sequence spans 324 residues: Tumor necrosis factor receptor superfamily member 6 (324 aa).

A signal peptide spans 1–21 (MLWIMAVLPLVLAGPELNVRM). Residues 22–171 (QGTDSIFEGL…CKKQSSNYKL (150 aa)) lie on the Extracellular side of the membrane. Asn-43 carries an N-linked (GlcNAc...) asparagine glycan. 3 TNFR-Cys repeats span residues 43–79 (NCSEGLYQVGPFCCQPCQPGERKVKDCTTSGGAPTCH), 80–123 (PCTE…NTKC), and 124–163 (RCKENFYCNASLCDHCYHCTSCGLEDILEPCTRTSNTKCK). 9 cysteine pairs are disulfide-bonded: Cys-44-Cys-55, Cys-56-Cys-69, Cys-59-Cys-78, Cys-81-Cys-97, Cys-100-Cys-115, Cys-103-Cys-123, Cys-125-Cys-139, Cys-142-Cys-154, and Cys-145-Cys-162. N-linked (GlcNAc...) asparagine glycosylation is found at Asn-114 and Asn-132. Residues 172–188 (LWLLILPGLAILFVFIY) form a helical membrane-spanning segment. Residues 189–324 (KRYRKRQPGD…RNENEGQSLE (136 aa)) are Cytoplasmic-facing. The interval 201-306 (SGIPSPESVP…EEIQAMVWED (106 aa)) is interaction with HIPK3. Ser-214 is subject to Phosphoserine. Positions 219–243 (NKYIWRTAEKMKICDAKKFARQHKI) are interaction with CALM. Positions 219–303 (NKYIWRTAEK…DIAEEIQAMV (85 aa)) constitute a Death domain.

As to quaternary structure, component of the death-induced signaling complex (DISC) composed of cell surface receptor FAS/CD95, adapter protein FADD and the CASP8 protease; recruitment of CASP8 to the complex is required for processing of CASP8 into the p18 and p10 subunits. Interacts directly (via DED domain) with NOL3 (via CARD domain); inhibits death-inducing signaling complex (DISC) assembly by inhibiting the increase in FAS-FADD binding induced by FAS activation. Binds DAXX. Interacts with HIPK3. Part of a complex containing HIPK3 and FADD. Binds RIPK1 and FAIM2. Interacts with BABAM2 and FEM1B. Interacts with CALM. In the absence of stimulation, interacts with BIRC2, DDX3X and GSK3B. The interaction with BIRC2 and DDX3X is further enhanced upon receptor stimulation and accompanied by DDX3X and BIRC2 cleavage. Post-translationally, palmitoylated. Palmitoylation by ZDHHC7 prevents the lysosomal degradation of FAS regulating its expression at the plasma membrane.

Its subcellular location is the cell membrane. The protein resides in the membrane raft. In terms of biological role, receptor for TNFSF6/FASLG. The adapter molecule FADD recruits caspase CASP8 to the activated receptor. The resulting death-inducing signaling complex (DISC) performs CASP8 proteolytic activation which initiates the subsequent cascade of caspases (aspartate-specific cysteine proteases) mediating apoptosis. FAS-mediated apoptosis may have a role in the induction of peripheral tolerance, in the antigen-stimulated suicide of mature T-cells, or both. This Rattus norvegicus (Rat) protein is Tumor necrosis factor receptor superfamily member 6 (Fas).